We begin with the raw amino-acid sequence, 403 residues long: Chaperone protein DnaJ (403 aa).

Positions 4-69 constitute a J domain; the sequence is DYYEILGVAR…DKRRRYDQFG (66 aa). The segment at 159 to 240 adopts a CR-type zinc-finger fold; that stretch reads GVEKTIKIKK…CYGEGIKQGE (82 aa). Residues Cys-172, Cys-175, Cys-188, Cys-191, Cys-214, Cys-217, Cys-228, and Cys-231 each contribute to the Zn(2+) site. CXXCXGXG motif repeat units lie at residues 172-179, 188-195, 214-221, and 228-235; these read CRECNGTG, CPTCHGSG, CPTCGGEG, and CPSCYGEG.

It belongs to the DnaJ family. In terms of assembly, homodimer. It depends on Zn(2+) as a cofactor.

Its subcellular location is the cytoplasm. Its function is as follows. Participates actively in the response to hyperosmotic and heat shock by preventing the aggregation of stress-denatured proteins and by disaggregating proteins, also in an autonomous, DnaK-independent fashion. Unfolded proteins bind initially to DnaJ; upon interaction with the DnaJ-bound protein, DnaK hydrolyzes its bound ATP, resulting in the formation of a stable complex. GrpE releases ADP from DnaK; ATP binding to DnaK triggers the release of the substrate protein, thus completing the reaction cycle. Several rounds of ATP-dependent interactions between DnaJ, DnaK and GrpE are required for fully efficient folding. Also involved, together with DnaK and GrpE, in the DNA replication of plasmids through activation of initiation proteins. In Chlorobaculum tepidum (strain ATCC 49652 / DSM 12025 / NBRC 103806 / TLS) (Chlorobium tepidum), this protein is Chaperone protein DnaJ.